Consider the following 653-residue polypeptide: Epithelial sodium channel subunit gamma (653 aa).

The Cytoplasmic portion of the chain corresponds to 1 to 54 (MGHGRRISESIKKQLPVTGPEAPTVKNLMDWYLNNTNTHGCRRIAVSRGYLRRW). The chain crosses the membrane as a helical span at residues 55–75 (IWICFTVSSVGMIFWQWTLLL). The Extracellular segment spans residues 76-546 (MSYYTVSVSV…GGQLGLWMSC (471 aa)). Intrachain disulfides connect C100–C290, C214–C221, C267–C274, C379–C464, C401–C460, C405–C456, C414–C441, and C416–C430. A helical transmembrane segment spans residues 547–567 (SIVCFLEMWEVFLVDILTIIA). Residues 568-653 (RYWLHRGRQW…DEQVSDTEVN (86 aa)) lie on the Cytoplasmic side of the membrane. Residues 582–608 (KERQMQQPSPPDHDTGHHNPVCIDDED) form a disordered region.

The protein belongs to the amiloride-sensitive sodium channel (TC 1.A.6) family. SCNN1G subfamily. Component of the heterotrimeric epithelial sodium channel (ENaC) composed of an alpha/SCNN1A, a beta/SCNN1B and a gamma/SCNN1G subunit. In terms of tissue distribution, strongly expressed in gill, liver, kidney and rectum and more weakly in heart, muscle and intestine.

It is found in the apical cell membrane. The catalysed reaction is Na(+)(in) = Na(+)(out). Originally identified and characterized by its inhibition by the diuretic drug amiloride. Functionally, this is one of the three pore-forming subunits of the heterotrimeric epithelial sodium channel (ENaC), a critical regulator of sodium balance and fluid homeostasis. ENaC operates in epithelial tissues, where it mediates the electrodiffusion of sodium ions from extracellular fluid through the apical membrane of cells, with water following osmotically. In Neoceratodus forsteri (Australian lungfish), this protein is Epithelial sodium channel subunit gamma.